Here is a 341-residue protein sequence, read N- to C-terminus: 5-formaminoimidazole-4-carboxamide-1-(beta)-D-ribofuranosyl 5'-monophosphate synthetase (341 aa).

Residues histidine 10 and threonine 77 each coordinate 5-amino-1-(5-phospho-beta-D-ribosyl)imidazole-4-carboxamide. The 212-residue stretch at 106 to 317 (DRSLKERLMR…YYGLLFDEPI (212 aa)) folds into the ATP-grasp domain. Residues 132–188 (DTLV…VLAY) and glutamate 210 contribute to the ATP site. Asparagine 238 lines the 5-amino-1-(5-phospho-beta-D-ribosyl)imidazole-4-carboxamide pocket. Mg(2+) contacts are provided by glutamate 277 and glutamate 290.

This sequence belongs to the phosphohexose mutase family. Mg(2+) serves as cofactor. Requires Mn(2+) as cofactor.

It catalyses the reaction 5-amino-1-(5-phospho-beta-D-ribosyl)imidazole-4-carboxamide + formate + ATP = 5-formamido-1-(5-phospho-D-ribosyl)imidazole-4-carboxamide + ADP + phosphate. The protein operates within purine metabolism; IMP biosynthesis via de novo pathway; 5-formamido-1-(5-phospho-D-ribosyl)imidazole-4-carboxamide from 5-amino-1-(5-phospho-D-ribosyl)imidazole-4-carboxamide (formate route): step 1/1. In terms of biological role, catalyzes the ATP- and formate-dependent formylation of 5-aminoimidazole-4-carboxamide-1-beta-d-ribofuranosyl 5'-monophosphate (AICAR) to 5-formaminoimidazole-4-carboxamide-1-beta-d-ribofuranosyl 5'-monophosphate (FAICAR) in the absence of folates. The protein is 5-formaminoimidazole-4-carboxamide-1-(beta)-D-ribofuranosyl 5'-monophosphate synthetase of Cenarchaeum symbiosum (strain A).